We begin with the raw amino-acid sequence, 131 residues long: DNA-directed RNA polymerase subunit Rpo8 (131 aa).

This sequence belongs to the archaeal Rpo8 RNA polymerase subunit family. Part of the 13-subunit RNA polymerase complex. Interacts with Rpo1N on the periphery of the clamp head.

It is found in the cytoplasm. The enzyme catalyses RNA(n) + a ribonucleoside 5'-triphosphate = RNA(n+1) + diphosphate. In terms of biological role, DNA-dependent RNA polymerase (RNAP) catalyzes the transcription of DNA into RNA using the four ribonucleoside triphosphates as substrates. The protein is DNA-directed RNA polymerase subunit Rpo8 of Saccharolobus shibatae (strain ATCC 51178 / DSM 5389 / JCM 8931 / NBRC 15437 / B12) (Sulfolobus shibatae).